Reading from the N-terminus, the 359-residue chain is Lachesin (359 aa).

The signal sequence occupies residues 1–25 (MWRPSISNCVWSTLLLAIFVQQTLA). In terms of domain architecture, Ig-like V-type spans 29 to 130 (PTISYITQEQ…HKVSAEVKLS (102 aa)). Cysteine 50 and cysteine 113 are disulfide-bonded. N-linked (GlcNAc...) asparagine glycosylation is found at asparagine 92 and asparagine 140. 2 consecutive Ig-like C2-type domains span residues 135 to 221 (PVIS…INVE) and 226 to 317 (PVIT…ARVN). 2 cysteine pairs are disulfide-bonded: cysteine 157-cysteine 204 and cysteine 247-cysteine 303. Residue alanine 336 is the site of GPI-anchor amidated alanine attachment. A propeptide spans 337-359 (GAEDVSATSFALVGILAALLFAR) (removed in mature form).

In terms of tissue distribution, expressed on differentiating neuronal cells from the onset of neurogenesis in both the central and peripheral nervous systems. First detected in the cellularized blastoderm, apart from in the ventral side. Expression persists uniformly in the early ectoderm until the end of gastrulation. From stage 10, expressed in an alternating strong/weak pattern in each segment until stage 15 when it disappears. From stage 11, expressed in subsets of neurons and later subsets of glial cells. From early stage 13, strongly expressed in trachea, hindgut, foregut and the nervous system.

Its subcellular location is the cell membrane. In terms of biological role, required for normal tracheal development and maintenance of the trans-epithelial diffusion barrier. Functions as a homophilic cell-adhesion molecule. May play a role in early neuronal differentiation and axon outgrowth. This Drosophila melanogaster (Fruit fly) protein is Lachesin (Lac).